We begin with the raw amino-acid sequence, 178 residues long: Large ribosomal subunit protein uL6 (178 aa).

Belongs to the universal ribosomal protein uL6 family. In terms of assembly, part of the 50S ribosomal subunit.

Its function is as follows. This protein binds to the 23S rRNA, and is important in its secondary structure. It is located near the subunit interface in the base of the L7/L12 stalk, and near the tRNA binding site of the peptidyltransferase center. The chain is Large ribosomal subunit protein uL6 from Staphylococcus aureus (strain Mu3 / ATCC 700698).